The primary structure comprises 1212 residues: MGKIKKIQRKGPPATKRPPKAARTESTDSALGLDAHSDLEKPATSSDDGFEEPTPKPKPSKKTTTLPEPVSIIAQKKNKFRTDDAKNVKPPTLEEMKELRDTRNLFHSNLFKLQVKEMLEELQLKTKYTEYIDNWMESFTVFTQRLKDGLVEKSQLEVPLNVDKKISGFIFSKPTKEPQLIGAASTGTLLGPKIVVDVALEMPKDCLHKDDYLNLIYDQKRALYLTYVTNQMRSDPAYSQDKFAFNYHGNNPLKPVLELTPAAKHVSKHLQLRLFITAPQSTFKPGRFVPWNNNIRPTYYNDEWDEEEALPSTQHYNASVLFDLTLAQNQALLDKAFKGRRNFQDGLLLLKVWLRQRELDRGFTGFGSHILASFIVYLNQQRILHQSSSSYQVARTVWNQLANTDWTNGITLAPASGQTEQLSTIAGYYDVCFMDVSGQLNLCANVPLGVYQRVRAEAKLAVDLLNDMKLNSFPYIFMQKCPLYTRVDNILKITNYSSIQQMLVLHSKPQMKYDFASYGYPQLLQILTELLQKGLKQRVQAILPIETVSSAWPVESKAPIIGQAIQLGLILDPEHAYEVLDKGPSSNDDPEGSAEFRKFWGEKSNLRRFQDGSITEAVVWGTTKDAPSKKRLIVRQIVMHLLEHHLQLDSKDIQYIAAELDLVYQLSPWFKVSKVKTKLELQQDTDAEALSPNVIRCYDDLARQLHALDDLPLEIVSISSISPVSRYCEPMPVLPQARMMADHIHASHIQRVIIQLGQSGKWPNELSALRALKTAFLIEIGEKLKAQCRLNWSITSEGLLVLKRGFCFLLELAHNKELALLKQEVTERGVTKYVDNPESRALEQRHYILPKVSGALHSLHQSHSAYGPTVLIAKRWLATQLLDDGIWPPMATELLVAHLYQQRNAPQAIAAPQTGFMRLLHLLAHSDWNGELFLLNFNSSWQEQQIGDLEHSFRSDRQSYPPLALATSYDQQHAGRLWTTGESPSLRILSHVSRLARHALEMIETSLQSKDLRFVRPAQLFRGSSEGYDLVIQLKSDLVPNALSYDLGSPFVSFDQPNYLLPRAGKDPLAAIVHQLRSAYSDYAAFFYNPHGGKELAIMWRPPAVFAPKAFKVTELQACTLCDKGKVQVVRETLVEDFKVLLKDFYLRISTPEELKREQREHQNPKRYFNAKPQDNESCSKSKKRKLAKAAKVQAPLKRKSLIKSRPLKSLS.

Disordered stretches follow at residues 1–72 (MGKI…PVSI) and 1156–1212 (KREQ…KSLS). The span at 1197-1212 (LKRKSLIKSRPLKSLS) shows a compositional bias: basic residues.

The protein belongs to the NRAP family. In terms of assembly, part of the small subunit (SSU) processome, composed of more than 70 proteins and the RNA chaperone small nucleolar RNA (snoRNA) U3.

The protein localises to the nucleus. Its subcellular location is the nucleolus. It is found in the chromosome. In terms of biological role, part of the small subunit (SSU) processome, first precursor of the small eukaryotic ribosomal subunit. During the assembly of the SSU processome in the nucleolus, many ribosome biogenesis factors, an RNA chaperone and ribosomal proteins associate with the nascent pre-rRNA and work in concert to generate RNA folding, modifications, rearrangements and cleavage as well as targeted degradation of pre-ribosomal RNA by the RNA exosome. This Drosophila persimilis (Fruit fly) protein is Nucleolar protein 6.